Here is a 192-residue protein sequence, read N- to C-terminus: Xanthine phosphoribosyltransferase (192 aa).

Residues leucine 20 and asparagine 27 each coordinate xanthine. 5-phospho-alpha-D-ribose 1-diphosphate is bound at residue 128-132; that stretch reads ANGQA. Lysine 156 provides a ligand contact to xanthine.

The protein belongs to the purine/pyrimidine phosphoribosyltransferase family. Xpt subfamily. As to quaternary structure, homodimer.

The protein resides in the cytoplasm. It carries out the reaction XMP + diphosphate = xanthine + 5-phospho-alpha-D-ribose 1-diphosphate. Its pathway is purine metabolism; XMP biosynthesis via salvage pathway; XMP from xanthine: step 1/1. In terms of biological role, converts the preformed base xanthine, a product of nucleic acid breakdown, to xanthosine 5'-monophosphate (XMP), so it can be reused for RNA or DNA synthesis. In Listeria monocytogenes serotype 4b (strain CLIP80459), this protein is Xanthine phosphoribosyltransferase.